A 106-amino-acid polypeptide reads, in one-letter code: Large ribosomal subunit protein uL24 (106 aa).

Belongs to the universal ribosomal protein uL24 family. Part of the 50S ribosomal subunit.

One of two assembly initiator proteins, it binds directly to the 5'-end of the 23S rRNA, where it nucleates assembly of the 50S subunit. In terms of biological role, one of the proteins that surrounds the polypeptide exit tunnel on the outside of the subunit. In Spiroplasma kunkelii, this protein is Large ribosomal subunit protein uL24.